We begin with the raw amino-acid sequence, 79 residues long: RNA-binding protein Hfq (79 aa).

The Sm domain maps to 9–69 (DTFLNHLRKE…ISTFTPQRPV (61 aa)).

This sequence belongs to the Hfq family. Homohexamer.

In terms of biological role, RNA chaperone that binds small regulatory RNA (sRNAs) and mRNAs to facilitate mRNA translational regulation in response to envelope stress, environmental stress and changes in metabolite concentrations. Also binds with high specificity to tRNAs. The polypeptide is RNA-binding protein Hfq (Brevibacillus brevis (strain 47 / JCM 6285 / NBRC 100599)).